A 321-amino-acid chain; its full sequence is Putative membrane-bound redox modulator Alx (321 aa).

Residues 1–6 lie on the Periplasmic side of the membrane; sequence MNTVGT. A helical membrane pass occupies residues 7 to 27; the sequence is PLLWGGFAVVVTIMLAIDLLL. Over 28 to 43 the chain is Cytoplasmic; the sequence is QGRRGAHAMTMKQAAA. A helical transmembrane segment spans residues 44–64; sequence WSLVWVTLSLLFNAAFWWYLV. Residues 65–89 lie on the Periplasmic side of the membrane; that stretch reads QTEGRAVADPQALAFLTGYLIEKSL. A helical transmembrane segment spans residues 90–110; the sequence is AVDNVFVWLMLFSYFSVPAAL. At 111–113 the chain is on the cytoplasmic side; it reads QRR. The chain crosses the membrane as a helical span at residues 114 to 134; the sequence is VLVYGVLGAIVLRTIMIFTGS. A topological domain (periplasmic) is located at residue W135. A helical membrane pass occupies residues 136–156; sequence LISQFDWILYIFGAFLLFTGV. Residues 157-198 are Cytoplasmic-facing; sequence KMALAHEDESGIGDKPLVRWLRGHLRMTDTIDNEHFFVRKNG. A helical membrane pass occupies residues 199-219; sequence LLYATPLMLVLILVELSDVIF. Topologically, residues 220–225 are periplasmic; that stretch reads AVDSIP. The helical transmembrane segment at 226–246 threads the bilayer; sequence AIFAVTTDPFIVLTSNLFAIL. Over 247-261 the chain is Cytoplasmic; sequence GLRAMYFLLAGVAER. The helical transmembrane segment at 262–282 threads the bilayer; the sequence is FSMLKYGLAVILVFIGIKMLI. Topologically, residues 283-286 are periplasmic; sequence VDFY. A helical transmembrane segment spans residues 287–307; sequence HIPIAVSLGVVFGILVMTFII. Residues 308-321 are Cytoplasmic-facing; sequence NAWVNYRHDKQRVE.

Belongs to the TerC family.

Its subcellular location is the cell inner membrane. Functionally, has been proposed to be a redox modulator. The sequence is that of Putative membrane-bound redox modulator Alx (alx) from Escherichia coli O6:H1 (strain CFT073 / ATCC 700928 / UPEC).